Reading from the N-terminus, the 284-residue chain is RNase adapter protein RapZ (284 aa).

8–15 provides a ligand contact to ATP; it reads GRSGSGKS. 56 to 59 serves as a coordination point for GTP; sequence DVRN. Residues 266–284 are RNA-binding; the sequence is RSRGKNVQSRHRTLEKRKT.

It belongs to the RapZ-like family. RapZ subfamily. As to quaternary structure, homotrimer.

Functionally, modulates the synthesis of GlmS, by affecting the processing and stability of the regulatory small RNA GlmZ. When glucosamine-6-phosphate (GlcN6P) concentrations are high in the cell, RapZ binds GlmZ and targets it to cleavage by RNase E. Consequently, GlmZ is inactivated and unable to activate GlmS synthesis. Under low GlcN6P concentrations, RapZ is sequestered and inactivated by an other regulatory small RNA, GlmY, preventing GlmZ degradation and leading to synthesis of GlmS. The polypeptide is RNase adapter protein RapZ (Salmonella typhi).